The chain runs to 457 residues: ATP-dependent RNA helicase DbpA (457 aa).

The Q motif signature appears at 3-31; that stretch reads AFSTLNVLPPAQLTNLNELGYLTMTPVQA. The region spanning 34–205 is the Helicase ATP-binding domain; that stretch reads LPAILAGKDV…GRVQRDPLAI (172 aa). Residue 47-54 participates in ATP binding; sequence AKTGSGKT. Residues 153–156 carry the DEAD box motif; sequence DEAD. Positions 230–376 constitute a Helicase C-terminal domain; it reads PLLQRLLSLH…QTPPANSSIA (147 aa). An involved in 23S rRNA binding region spans residues 383-457; the sequence is ATLCIDGGKK…GKTCRVRLLK (75 aa).

Belongs to the DEAD box helicase family. DbpA subfamily. In terms of assembly, monomer.

It localises to the cytoplasm. The catalysed reaction is ATP + H2O = ADP + phosphate + H(+). With respect to regulation, requires hairpin 92 of 23S rRNA for optimal activity. ATPase activity is stimulated by interaction of the N-terminal domain with RNA. Functionally, DEAD-box RNA helicase involved in the assembly of the 50S ribosomal subunit. Has an RNA-dependent ATPase activity, which is specific for 23S rRNA, and a 3' to 5' RNA helicase activity that uses the energy of ATP hydrolysis to destabilize and unwind short rRNA duplexes. Requires a single-stranded RNA loading site on the 3' side of the substrate helix. The chain is ATP-dependent RNA helicase DbpA from Escherichia coli (strain K12).